The following is a 142-amino-acid chain: Small ribosomal subunit protein uS9 (142 aa).

Residues Lys-117–Arg-142 form a disordered region. Residues Thr-123–Arg-142 are compositionally biased toward basic residues.

It belongs to the universal ribosomal protein uS9 family.

The sequence is that of Small ribosomal subunit protein uS9 from Pyrobaculum aerophilum (strain ATCC 51768 / DSM 7523 / JCM 9630 / CIP 104966 / NBRC 100827 / IM2).